Here is a 217-residue protein sequence, read N- to C-terminus: MSHSPLSSSIADLRKSYERAELSEDASHADPLLQFDQWLREAIAAQVPEPNAMTVATVGSDLRPSTRVVLIKGYDAQGIVWYTNYDSRKGRQIAGNPYAALQFHWVELERVVRIEGVVEKVSEAESDAYFHSRPLDSRIGAWASPQSQVIPSRGMLVANAAKYGAQFLLKPPRPPHWGGFRLRPDQWEFWQGRKSRLHDRLRYRLEDGTWERERLAP.

Substrate is bound by residues 14 to 17 (RKSY) and Lys-72. FMN contacts are provided by residues 67–72 (RVVLIK), 82–83 (YT), Arg-88, and Lys-89. 3 residues coordinate substrate: Tyr-129, Arg-133, and Ser-137. FMN-binding positions include 146 to 147 (QS) and Trp-190. 196–198 (RLH) is a binding site for substrate. Residue Arg-200 participates in FMN binding.

The protein belongs to the pyridoxamine 5'-phosphate oxidase family. Homodimer. The cofactor is FMN.

It catalyses the reaction pyridoxamine 5'-phosphate + O2 + H2O = pyridoxal 5'-phosphate + H2O2 + NH4(+). The catalysed reaction is pyridoxine 5'-phosphate + O2 = pyridoxal 5'-phosphate + H2O2. It participates in cofactor metabolism; pyridoxal 5'-phosphate salvage; pyridoxal 5'-phosphate from pyridoxamine 5'-phosphate: step 1/1. Its pathway is cofactor metabolism; pyridoxal 5'-phosphate salvage; pyridoxal 5'-phosphate from pyridoxine 5'-phosphate: step 1/1. Functionally, catalyzes the oxidation of either pyridoxine 5'-phosphate (PNP) or pyridoxamine 5'-phosphate (PMP) into pyridoxal 5'-phosphate (PLP). This is Pyridoxine/pyridoxamine 5'-phosphate oxidase from Acidovorax sp. (strain JS42).